Consider the following 352-residue polypeptide: MSGNTFGKIFTVTTCGESHGDSLAAIIDGCPSNIPLCEAYIQLELDRRKPGQSKFTTQRKEPDEVKIISGVFEGKTTGTPIGLIIKNQDQKSKDYSEIKDKFRPGHADYTYFKKYGIRDYRGGGRSSARETAMRVAAGAIAKKILKHYGIEIYGFCSQIGSLKIDFIDKDFINQNPFFIANKNAVPACEDLIHSIRKQGDSIGAEVTVVATGLEAGLGRPVFDRLDASIAYAMMSINAVKAVSIGDGFDCVAQKGSQHRDEITQQQGFLSNHAGGILGGISTGQDIIAKLAFKPTSSILQPGKSIDVQGNDTTVITKGRHDPCVGIRGVPIAEAMLALVLVDELLITRSYRD.

Arg-48 serves as a coordination point for NADP(+). FMN-binding positions include 125-127 (RSS), 237-238 (NA), Gly-278, 293-297 (KPTSS), and Arg-319.

Belongs to the chorismate synthase family. In terms of assembly, homotetramer. It depends on FMNH2 as a cofactor.

It carries out the reaction 5-O-(1-carboxyvinyl)-3-phosphoshikimate = chorismate + phosphate. It functions in the pathway metabolic intermediate biosynthesis; chorismate biosynthesis; chorismate from D-erythrose 4-phosphate and phosphoenolpyruvate: step 7/7. Catalyzes the anti-1,4-elimination of the C-3 phosphate and the C-6 proR hydrogen from 5-enolpyruvylshikimate-3-phosphate (EPSP) to yield chorismate, which is the branch point compound that serves as the starting substrate for the three terminal pathways of aromatic amino acid biosynthesis. This reaction introduces a second double bond into the aromatic ring system. This is Chorismate synthase from Francisella tularensis subsp. holarctica (strain FTNF002-00 / FTA).